The chain runs to 286 residues: Bark agglutinin I polypeptide B (286 aa).

An N-terminal signal peptide occupies residues 1–31 (MASYKFKTQNSFLLLLSISFFFLLLLNKVNS). Residue asparagine 148 is glycosylated (N-linked (GlcNAc...) asparagine). Mn(2+) contacts are provided by glutamate 157 and aspartate 159. Ca(2+) contacts are provided by aspartate 159, asparagine 163, and aspartate 167. Positions 167 and 172 each coordinate Mn(2+).

Belongs to the leguminous lectin family. In terms of assembly, RPbAI is composed of two polypeptides, A and B, that associate into five different tetrameric isolectins. The A4 combination is the only one devoid of agglutination activity. Isoform B4 displays maximal agglutination activity. In terms of tissue distribution, mostly in the axial and ray parenchymal cells of the inner bark. Fewer in the axial and ray parenchymal cells of the xylem. Strong expression in bark. The lectin accumulates in the inner bark in autumn and winter and disappears in may.

Bark lectins are storage proteins that probably maintain stocks of nitrogen during dormant period. Self-aggregatable molecules that can bind their own carbohydrate side chains. They could also play a role in the plant's defense against phytophagous invertebrates or herbivorous higher animals. The protein is Bark agglutinin I polypeptide B of Robinia pseudoacacia (Black locust).